A 647-amino-acid chain; its full sequence is ATP-binding protein Uup (647 aa).

ABC transporter domains lie at Met1–Ala253 and Phe320–Lys546. Residues Gly36–Ser43 and Gly352–Thr359 each bind ATP. Basic and acidic residues predominate over residues Ala545–Ser563. The segment at Ala545–Lys569 is disordered. Residues Asn559–Ala647 form a C-terminal domain (CTD), binds DNA region.

The protein belongs to the ABC transporter superfamily. ABCF family. Uup subfamily.

It is found in the cytoplasm. It catalyses the reaction ATP + H2O = ADP + phosphate + H(+). Functionally, probably plays a role in ribosome assembly or function. May be involved in resolution of branched DNA intermediates that result from template switching in postreplication gaps. Binds DNA and has ATPase activity. This Haemophilus influenzae (strain ATCC 51907 / DSM 11121 / KW20 / Rd) protein is ATP-binding protein Uup.